The sequence spans 148 residues: RxLR effector protein SFI7 (148 aa).

Positions 1 to 22 are cleaved as a signal peptide; sequence MRAYFVLLVAATAILTYGGATA. N-linked (GlcNAc...) asparagine glycosylation is present at Asn-32. A RxLR-dEER motif is present at residues 44-58; the sequence is RSLRVAPSGGNGEER.

Belongs to the RxLR effector family.

Its subcellular location is the secreted. The protein resides in the host cytoplasm. It is found in the host cell membrane. Its function is as follows. Effector that suppresses flg22-induced post-translational MAP kinase activation in tomato but not in Arabidopsis. The perception of highly conserved pathogen- or microbe-associated molecular patterns (PAMPs/MAMPs), such as flg22, triggers converging signaling pathways recruiting MAP kinase cascades and inducing transcriptional re-programming, yielding a generic antimicrobial response. Also partially attenuates INF1-triggered cell death. In Phytophthora infestans (strain T30-4) (Potato late blight agent), this protein is RxLR effector protein SFI7.